The primary structure comprises 113 residues: Large ribosomal subunit protein bL17 (113 aa).

This sequence belongs to the bacterial ribosomal protein bL17 family. Part of the 50S ribosomal subunit. Contacts protein L32.

This is Large ribosomal subunit protein bL17 from Clostridioides difficile (strain 630) (Peptoclostridium difficile).